The primary structure comprises 87 residues: Toxin Cll5b (87 aa).

Residues 1-19 form the signal peptide; that stretch reads MNSLLMITACLAEIGTVWA. One can recognise an LCN-type CS-alpha/beta domain in the interval 20–85; the sequence is KEGYLVNKST…TYPLPNKSCS (66 aa). Disulfide bonds link C31-C84, C35-C60, C44-C65, and C48-C67. The propeptide at 86–87 is removed by a carboxypeptidase; that stretch reads KK.

Belongs to the long (4 C-C) scorpion toxin superfamily. Sodium channel inhibitor family. Beta subfamily. As to expression, expressed by the venom gland.

It localises to the secreted. Beta toxins bind voltage-independently at site-4 of sodium channels (Nav) and shift the voltage of activation toward more negative potentials thereby affecting sodium channel activation and promoting spontaneous and repetitive firing. This chain is Toxin Cll5b, found in Centruroides limpidus (Mexican scorpion).